Reading from the N-terminus, the 443-residue chain is Glutamate--tRNA ligase 1 (443 aa).

The 'HIGH' region motif lies at 7 to 17 (PSPTGYLHVGN). Residues 236-240 (KISKR) carry the 'KMSKS' region motif. Lys239 is a binding site for ATP.

It belongs to the class-I aminoacyl-tRNA synthetase family. Glutamate--tRNA ligase type 1 subfamily. In terms of assembly, monomer.

The protein localises to the cytoplasm. The enzyme catalyses tRNA(Glu) + L-glutamate + ATP = L-glutamyl-tRNA(Glu) + AMP + diphosphate. In terms of biological role, catalyzes the attachment of glutamate to tRNA(Glu) in a two-step reaction: glutamate is first activated by ATP to form Glu-AMP and then transferred to the acceptor end of tRNA(Glu). The sequence is that of Glutamate--tRNA ligase 1 from Ehrlichia chaffeensis (strain ATCC CRL-10679 / Arkansas).